Here is a 508-residue protein sequence, read N- to C-terminus: Small ribosomal subunit protein uS3m (508 aa).

The protein belongs to the universal ribosomal protein uS3 family. In terms of assembly, component of the mitochondrial small ribosomal subunit (mt-SSU). Mature N.crassa 74S mitochondrial ribosomes consist of a small (37S) and a large (54S) subunit. The 37S small subunit contains a 16S ribosomal RNA (16S mt-rRNA) and 32 different proteins. The 54S large subunit contains a 23S rRNA (23S mt-rRNA) and 42 different proteins. uS3m, uS4m and uS5m form the narrow entry site of the mRNA channel.

It localises to the mitochondrion. Functionally, component of the mitochondrial ribosome (mitoribosome), a dedicated translation machinery responsible for the synthesis of mitochondrial genome-encoded proteins, including at least some of the essential transmembrane subunits of the mitochondrial respiratory chain. The mitoribosomes are attached to the mitochondrial inner membrane and translation products are cotranslationally integrated into the membrane. uS3m is essential for mitochondrial protein synthesis and required for the maturation of small ribosomal subunits. This chain is Small ribosomal subunit protein uS3m (var1), found in Neurospora crassa (strain ATCC 24698 / 74-OR23-1A / CBS 708.71 / DSM 1257 / FGSC 987).